Here is a 61-residue protein sequence, read N- to C-terminus: uncharacterized protein (61 aa).

This is an uncharacterized protein from Fowlpox virus (strain NVSL) (FPV).